A 93-amino-acid polypeptide reads, in one-letter code: UPF0297 protein PEPE_1262 (93 aa).

Belongs to the UPF0297 family.

This chain is UPF0297 protein PEPE_1262, found in Pediococcus pentosaceus (strain ATCC 25745 / CCUG 21536 / LMG 10740 / 183-1w).